Here is a 436-residue protein sequence, read N- to C-terminus: GTPase Der (436 aa).

EngA-type G domains are found at residues 4-167 (PTIA…PEQQ) and 176-351 (IKFS…ENHR). Residues 10-17 (GRANVGKS), 57-61 (DTGGI), 119-122 (NKID), 182-189 (GRPNVGKS), 229-233 (DTAGM), and 294-297 (NKWD) each bind GTP. Positions 352 to 436 (KRVQSSTLNE…PLHLIARKRN (85 aa)) constitute a KH-like domain.

This sequence belongs to the TRAFAC class TrmE-Era-EngA-EngB-Septin-like GTPase superfamily. EngA (Der) GTPase family. As to quaternary structure, associates with the 50S ribosomal subunit.

Functionally, GTPase that plays an essential role in the late steps of ribosome biogenesis. In Macrococcus caseolyticus (strain JCSC5402) (Macrococcoides caseolyticum), this protein is GTPase Der.